A 206-amino-acid polypeptide reads, in one-letter code: Urease accessory protein UreG (206 aa).

13-20 (GPVGSGKT) serves as a coordination point for GTP.

This sequence belongs to the SIMIBI class G3E GTPase family. UreG subfamily. Homodimer. UreD, UreF and UreG form a complex that acts as a GTP-hydrolysis-dependent molecular chaperone, activating the urease apoprotein by helping to assemble the nickel containing metallocenter of UreC. The UreE protein probably delivers the nickel.

It localises to the cytoplasm. Functionally, facilitates the functional incorporation of the urease nickel metallocenter. This process requires GTP hydrolysis, probably effectuated by UreG. The polypeptide is Urease accessory protein UreG (Natronomonas pharaonis (strain ATCC 35678 / DSM 2160 / CIP 103997 / JCM 8858 / NBRC 14720 / NCIMB 2260 / Gabara) (Halobacterium pharaonis)).